A 234-amino-acid chain; its full sequence is Uridylate kinase (234 aa).

10 to 11 provides a ligand contact to ATP; that stretch reads GS. Residue G44 participates in UMP binding. Residues G45 and R49 each coordinate ATP. Residues D66 and 114 to 120 each bind UMP; that span reads ITPAQTT. The ATP site is built by T140, Y146, and D149.

It belongs to the UMP kinase family. As to quaternary structure, homohexamer.

Its subcellular location is the cytoplasm. The catalysed reaction is UMP + ATP = UDP + ADP. It participates in pyrimidine metabolism; CTP biosynthesis via de novo pathway; UDP from UMP (UMPK route): step 1/1. Its activity is regulated as follows. Inhibited by UTP. Its function is as follows. Catalyzes the reversible phosphorylation of UMP to UDP. In Methanoculleus marisnigri (strain ATCC 35101 / DSM 1498 / JR1), this protein is Uridylate kinase.